The primary structure comprises 311 residues: Probable mitochondrial phosphate carrier protein (311 aa).

At 1-23 the chain is on the mitochondrial intermembrane side; that stretch reads MSTPLIPPAPPKKTLQLYTPQYY. Solcar repeat units lie at residues 21 to 105, 118 to 203, and 219 to 303; these read QYYG…FKHK, YRTS…IVEA, and EKIG…FKIM. The helical transmembrane segment at 24–44 threads the bilayer; the sequence is GLCTLGGLLACGTTHSAITPL. At 45-67 the chain is on the mitochondrial matrix side; it reads DLIKCRKQVNPNIYPGNIAGFKT. The chain crosses the membrane as a helical span at residues 68-88; that stretch reads ILSKEGLRGLYTGGMPTLIGY. Over 89 to 120 the chain is Mitochondrial intermembrane; that stretch reads SLQGCGKYGFYELFKHKYSTLVGAQKAHEYRT. The helical transmembrane segment at 121–141 threads the bilayer; the sequence is SIYLAASASAELLADIMLCPM. The Mitochondrial matrix segment spans residues 142 to 171; that stretch reads EAIKVRVQTSNPRFANTTREAWSKIVTNEG. A helical transmembrane segment spans residues 172–192; sequence FGTLYRGLAPLWFRQIPYTMM. Over 193–220 the chain is Mitochondrial intermembrane; sequence KFASFERIVEALYTYIGKPKNMYSKAEK. The chain crosses the membrane as a helical span at residues 221–241; it reads IGISFAGGYMAGVLCAIISHP. Residues 242 to 269 are Mitochondrial matrix-facing; that stretch reads ADVMVSKLNSNKKAGEGAGAAAARIYKE. Residues 270 to 290 traverse the membrane as a helical segment; that stretch reads IGFSGLWNGLGVRIVMIGTLT. Topologically, residues 291–311 are mitochondrial intermembrane; it reads GAQWLIYDSFKIMCGFPATGA.

The protein belongs to the mitochondrial carrier (TC 2.A.29) family.

The protein resides in the mitochondrion inner membrane. Its function is as follows. Transport of phosphate groups from the cytosol to the mitochondrial matrix. The protein is Probable mitochondrial phosphate carrier protein of Schizosaccharomyces pombe (strain 972 / ATCC 24843) (Fission yeast).